The primary structure comprises 867 residues: Glucans biosynthesis glucosyltransferase H (867 aa).

The disordered stretch occupies residues 71–91 (DDEGRTQLETMPKATRSSISP). Helical transmembrane passes span 139–156 (YILL…TWYM), 194–216 (ILIL…LMGF), 518–540 (VMSY…LQVV), 568–590 (IALL…LLIW), 603–625 (VTIS…MLFH), and 680–702 (FLFW…VFSS).

This sequence belongs to the glycosyltransferase 2 family. OpgH subfamily.

It localises to the cell inner membrane. Its pathway is glycan metabolism; osmoregulated periplasmic glucan (OPG) biosynthesis. Its function is as follows. Involved in the biosynthesis of osmoregulated periplasmic glucans (OPGs). This Nitrosomonas europaea (strain ATCC 19718 / CIP 103999 / KCTC 2705 / NBRC 14298) protein is Glucans biosynthesis glucosyltransferase H.